Here is a 144-residue protein sequence, read N- to C-terminus: Putative RNase YutE (144 aa).

The active site involves Arg96. The RX(4)HXY motif signature appears at 96–103 (RKTLVQQY).

The protein belongs to the HepT RNase toxin family. Homodimer, probably forms a complex with cognate antitoxin YutD.

Functionally, probable toxic component of a putative type VII toxin-antitoxin (TA) system, probably an RNase. Probably neutralized by cognate antitoxin YutD. In Bacillus subtilis (strain 168), this protein is Putative RNase YutE (yutE).